The primary structure comprises 200 residues: CASP-like protein 1D2 (200 aa).

Residues M1–P26 are disordered. At M1–K36 the chain is on the cytoplasmic side. Residues I37 to V57 form a helical membrane-spanning segment. Over T58–A85 the chain is Extracellular. A helical membrane pass occupies residues F86–V106. Topologically, residues S107–M129 are cytoplasmic. The helical transmembrane segment at V130–L150 threads the bilayer. Topologically, residues K151–Y171 are extracellular. A helical membrane pass occupies residues I172–C192. At S193–P200 the chain is on the cytoplasmic side.

Belongs to the Casparian strip membrane proteins (CASP) family. As to quaternary structure, homodimer and heterodimers.

Its subcellular location is the cell membrane. This Arabidopsis lyrata subsp. lyrata (Lyre-leaved rock-cress) protein is CASP-like protein 1D2.